Here is a 371-residue protein sequence, read N- to C-terminus: Glutamate 5-kinase (371 aa).

Residue Lys10 coordinates ATP. Substrate contacts are provided by Ser50, Asp137, and Asn149. ATP-binding positions include 169 to 170 and 208 to 214; these read SD and TGGMFTK. In terms of domain architecture, PUA spans 274–352; the sequence is EGRIYIDDGA…EEIRNILGED (79 aa).

This sequence belongs to the glutamate 5-kinase family.

Its subcellular location is the cytoplasm. The catalysed reaction is L-glutamate + ATP = L-glutamyl 5-phosphate + ADP. It functions in the pathway amino-acid biosynthesis; L-proline biosynthesis; L-glutamate 5-semialdehyde from L-glutamate: step 1/2. Its function is as follows. Catalyzes the transfer of a phosphate group to glutamate to form L-glutamate 5-phosphate. The sequence is that of Glutamate 5-kinase from Dictyoglomus turgidum (strain DSM 6724 / Z-1310).